Here is a 427-residue protein sequence, read N- to C-terminus: tRNA pseudouridine synthase Pus10 (427 aa).

Aspartate 240 functions as the Nucleophile in the catalytic mechanism. Positions 306 and 378 each coordinate substrate.

It belongs to the pseudouridine synthase Pus10 family.

The enzyme catalyses uridine(54) in tRNA = pseudouridine(54) in tRNA. It carries out the reaction uridine(55) in tRNA = pseudouridine(55) in tRNA. Responsible for synthesis of pseudouridine from uracil-54 and uracil-55 in the psi GC loop of transfer RNAs. The polypeptide is tRNA pseudouridine synthase Pus10 (Halorubrum lacusprofundi (strain ATCC 49239 / DSM 5036 / JCM 8891 / ACAM 34)).